The sequence spans 564 residues: Dihydroxy-acid dehydratase 2 (564 aa).

A [2Fe-2S] cluster-binding site is contributed by Cys59. Mg(2+) is bound at residue Asp91. Position 132 (Cys132) interacts with [2Fe-2S] cluster. Residues Asp133 and Lys134 each coordinate Mg(2+). Lys134 carries the post-translational modification N6-carboxylysine. Cys204 lines the [2Fe-2S] cluster pocket. Glu454 serves as a coordination point for Mg(2+). Ser480 serves as the catalytic Proton acceptor.

It belongs to the IlvD/Edd family. As to quaternary structure, homodimer. [2Fe-2S] cluster serves as cofactor. Mg(2+) is required as a cofactor.

It catalyses the reaction (2R)-2,3-dihydroxy-3-methylbutanoate = 3-methyl-2-oxobutanoate + H2O. The catalysed reaction is (2R,3R)-2,3-dihydroxy-3-methylpentanoate = (S)-3-methyl-2-oxopentanoate + H2O. It participates in amino-acid biosynthesis; L-isoleucine biosynthesis; L-isoleucine from 2-oxobutanoate: step 3/4. Its pathway is amino-acid biosynthesis; L-valine biosynthesis; L-valine from pyruvate: step 3/4. Functions in the biosynthesis of branched-chain amino acids. Catalyzes the dehydration of (2R,3R)-2,3-dihydroxy-3-methylpentanoate (2,3-dihydroxy-3-methylvalerate) into 2-oxo-3-methylpentanoate (2-oxo-3-methylvalerate) and of (2R)-2,3-dihydroxy-3-methylbutanoate (2,3-dihydroxyisovalerate) into 2-oxo-3-methylbutanoate (2-oxoisovalerate), the penultimate precursor to L-isoleucine and L-valine, respectively. This Staphylococcus saprophyticus subsp. saprophyticus (strain ATCC 15305 / DSM 20229 / NCIMB 8711 / NCTC 7292 / S-41) protein is Dihydroxy-acid dehydratase 2.